Consider the following 349-residue polypeptide: MVRAKNWTLKKHFHGHPTDSDFELKTVELPPLNNGEVLLEALFLSVDPYMRLGSKRLKEGDTMMGQQVARVVESKNPAWPVGTLVLAHSGWASHSISDGQQLEKLLTEWPDTLPLSLALGTVGMPGITAYFGLLEICGAKSGDTVLVNAAAGAVGAVVGQIAKIKGCRVVGAAGSEEKVDYLKKIGFDFAFNYKTVKSLEETLKKAAPDGYDCYFDNVGGEFSNTVIRQMKKFGRVAICGAISMYNSTGQLPPGPSPESVLYQEIRMEGFIFNRWKGEVGQKALKELLTWVLEGKIQYREFVIEGFENMPAAFMRMLKGENVGKARSESLKSGTCKPGDHPHDLIFPIT.

Thr-18 bears the Phosphothreonine mark. Position 20 is a phosphoserine (Ser-20). Residues 152 to 155 (GAVG), Lys-178, Tyr-193, Asn-217, 239 to 245 (CGAISMY), 270 to 272 (FIF), and Asn-321 contribute to the NADP(+) site. Lys-178 bears the N6-(2-hydroxyisobutyryl)lysine; alternate mark. Position 178 is an N6-acetyllysine; alternate (Lys-178).

Belongs to the NADP-dependent oxidoreductase L4BD family. In terms of assembly, monomer or homodimer.

The protein resides in the cytoplasm. The enzyme catalyses 13,14-dihydro-15-oxo-prostaglandin E1 + NADP(+) = 15-oxoprostaglandin E1 + NADPH + H(+). It carries out the reaction 13,14-dihydro-15-oxo-prostaglandin E2 + NADP(+) = 15-oxoprostaglandin E2 + NADPH + H(+). The catalysed reaction is 13,14-dihydro-15-oxo-prostaglandin F1alpha + NADP(+) = 15-oxoprostaglandin F1alpha + NADPH + H(+). It catalyses the reaction 13,14-dihydro-15-oxo-PGF2alpha + NADP(+) = 15-oxoprostaglandin F2alpha + NADPH + H(+). The enzyme catalyses leukotriene B4 + NADP(+) = 12-oxo-leukotriene B4 + NADPH + H(+). It carries out the reaction 20-hydroxy-leukotriene B4 + NADP(+) = 12-oxo-20-hydroxy-leukotriene B4 + NADPH + H(+). The catalysed reaction is 6-trans-leukotriene B4 + NADP(+) = 12-oxo-(5S)-hydroxy-(6E,8E,10E,14Z)-eicosatetraenoate + NADPH + H(+). It catalyses the reaction (5S,12S)-dihydroxy-(6E,10E,12E,14Z)-eicosatetraenoate + NADP(+) = 12-oxo-(5S)-hydroxy-(6E,8E,10E,14Z)-eicosatetraenoate + NADPH + H(+). The enzyme catalyses an n-alkanal + NADP(+) = an alk-2-enal + NADPH + H(+). It carries out the reaction hexanal + NADP(+) = (E)-hex-2-enal + NADPH + H(+). The catalysed reaction is octanal + NADP(+) = (2E)-octenal + NADPH + H(+). It catalyses the reaction decanal + NADP(+) = (2E)-decenal + NADPH + H(+). The enzyme catalyses dodecanal + NADP(+) = (2E)-dodecenal + NADPH + H(+). It carries out the reaction 4-hydroxynonanal + NADP(+) = (E)-4-hydroxynon-2-enal + NADPH + H(+). The catalysed reaction is pentan-2-one + NADP(+) = (E)-pent-3-en-2-one + NADPH + H(+). It catalyses the reaction nonan-2-one + NADP(+) = (3E)-nonen-2-one + NADPH + H(+). Functionally, NAD(P)H-dependent oxidoreductase involved in metabolic inactivation of pro- and anti-inflammatory eicosanoids: prostaglandins (PG), leukotrienes (LT) and lipoxins (LX). Catalyzes with high efficiency the reduction of the 13,14 double bond of 15-oxoPGs, including 15-oxo-PGE1, 15-oxo-PGE2, 15-oxo-PGF1-alpha and 15-oxo-PGF2-alpha. Catalyzes with lower efficiency the oxidation of the hydroxyl group at C12 of LTB4 and its derivatives, converting them into biologically less active 12-oxo-LTB4 metabolites. Reduces 15-oxo-LXA4 to 13,14 dihydro-15-oxo-LXA4, enhancing neutrophil recruitment at the inflammatory site. Plays a role in metabolic detoxification of alkenals and ketones. Reduces alpha,beta-unsaturated alkenals and ketones, particularly those with medium-chain length, showing highest affinity toward (2E)-decenal and (3E)-3-nonen-2-one. May inactivate 4-hydroxy-2-nonenal, a cytotoxic lipid constituent of oxidized low-density lipoprotein particles. This Oryctolagus cuniculus (Rabbit) protein is Prostaglandin reductase 1 (PTGR1).